The following is a 107-amino-acid chain: DNA polymerase delta subunit 4 (107 aa).

The short motif at 1 to 16 is the PCNA-interaction protein motif (PIP box) element; it reads MGRKRFITDSYPVVKK. The disordered stretch occupies residues 1 to 40; that stretch reads MGRKRFITDSYPVVKKREGPPGHSKGELAPELGEDTQSLS. Basic and acidic residues predominate over residues 15 to 28; that stretch reads KKREGPPGHSKGEL.

This sequence belongs to the DNA polymerase delta subunit 4 family. As to quaternary structure, component of the tetrameric DNA polymerase delta complex (Pol-delta4), which consists of POLD1/p125, POLD2/p50, POLD3/p66/p68 and POLD4/p12, with POLD1 bearing DNA polymerase and 3' to 5' proofreading exonuclease activities. Within this complex, directly interacts with POLD1 and POLD2. Directly interacts with PCNA, as do POLD1 and POLD3; this interaction stimulates Pol-delta4 polymerase activity. As POLD1 and POLD2, directly interacts with WRNIP1; this interaction stimulates DNA polymerase delta-mediated DNA synthesis, independently of the presence of PCNA, possibly by increasing initiation frequency. Upon genotoxic stress induced by DNA damaging agents or by replication stress, POLD4 is proteolytically degraded and Pol-delta4 is converted into a trimeric form of the complex (Pol-delta3) that has an increased proofreading activity. The DNA polymerase delta complex interacts with POLDIP2; this interaction is probably mediated through direct binding to POLD2. In terms of processing, ubiquitinated; undergoes 'Lys-48'-linked polyubiquitination in response to UV irradiation or treatment with an alkylating agent, leading to proteasomal degradation. This modification is mediated, at least in part, by RNF8. Post-translationally, ubiquitinated; undergoes 'Lys-48'-linked ubiquitination in response to UV irradiation, leading to proteasomal degradation. This modification is partly mediated by RNF8 and by the DCX(DTL) E3 ubiquitin ligase complex (also called CRL4(CDT2)). Efficient degradation requires the presence of PCNA and is required for the inhibition of fork progression after DNA damage.

The protein resides in the nucleus. As a component of the tetrameric DNA polymerase delta complex (Pol-delta4), plays a role in high fidelity genome replication and repair. Within this complex, increases the rate of DNA synthesis and decreases fidelity by regulating POLD1 polymerase and proofreading 3' to 5' exonuclease activity. Pol-delta4 participates in Okazaki fragment processing, through both the short flap pathway, as well as a nick translation system. Under conditions of DNA replication stress, required for the repair of broken replication forks through break-induced replication (BIR), a mechanism that may induce segmental genomic duplications of up to 200 kb. Involved in Pol-delta4 translesion synthesis (TLS) of templates carrying O6-methylguanine or abasic sites. Its degradation in response to DNA damage is required for the inhibition of fork progression and cell survival. The polypeptide is DNA polymerase delta subunit 4 (Pold4) (Mus musculus (Mouse)).